The primary structure comprises 1104 residues: Collagenase ColA (1104 aa).

The N-terminal stretch at 1–39 (MKKNLKRGELTKLKLVERWSATFTLAAFILFNSSFKVLA) is a signal peptide. Residues 40–86 (ADKKVENSNNGQITREINADQISKTELNNEVATDNNRPLGPSIAPSR) constitute a propeptide that is removed on maturation. The interval 87–761 (ARNNKIYTFD…YVYDVVFHGM (675 aa)) is S1 metalloprotease domain. The tract at residues 93 to 367 (YTFDELNRMN…AANDLDLNFG (275 aa)) is activator domain. The segment at 377–646 (DFNKIKADAR…MDSLLNNIDN (270 aa)) is catalytic subdomain. E477 is a binding site for Ca(2+). H502 serves as a coordination point for Zn(2+). E503 is a catalytic residue. H506 is a binding site for Zn(2+). G510, V514, and G516 together coordinate Ca(2+). E534 contributes to the Zn(2+) binding site. The helper subdomain stretch occupies residues 654–767 (DEYVNGHEAK…FHGMNTDTNT (114 aa)). The interval 762 to 860 (NTDTNTDVHV…KKIKVVEDKP (99 aa)) is S2 domain. Residues N772, K773, D800, D802, D841, E866, E868, N870, D894, D897, E993, E995, N997, L1016, D1020, K1022, and D1023 each contribute to the Ca(2+) site. One can recognise a PKD domain in the interval 774–862 (EPKAVIKSDS…IKVVEDKPVE (89 aa)). The segment at 865–979 (NESEPNNDFE…TYTVNVKGNL (115 aa)) is S3a collagen-binding domain. An S3b collagen-binding domain region spans residues 992-1104 (KEVENNNDFD…GNYIVNLQNK (113 aa)).

This sequence belongs to the peptidase M9B family. Collagenase subfamily. It depends on Ca(2+) as a cofactor. Zn(2+) serves as cofactor.

The protein resides in the secreted. It catalyses the reaction Digestion of native collagen in the triple helical region at Xaa-|-Gly bonds. With synthetic peptides, a preference is shown for Gly at P3 and P1', Pro and Ala at P2 and P2', and hydroxyproline, Ala or Arg at P3'.. Its function is as follows. Clostridial collagenases are among the most efficient degraders of eukaryotic collagen known; saprophytes use collagen as a carbon source while pathogens additionally digest collagen to aid in host colonization. Has both tripeptidylcarboxypeptidase on Gly-X-Y and endopeptidase activities; the endopeptidase cuts within the triple helix region of collagen while tripeptidylcarboxypeptidase successively digests the exposed ends, thus clostridial collagenases can digest large sections of collagen. This chain is Collagenase ColA (colA), found in Clostridium perfringens (strain 13 / Type A).